Reading from the N-terminus, the 96-residue chain is UPF0102 protein ML1607 (96 aa).

It belongs to the UPF0102 family.

The chain is UPF0102 protein ML1607 from Mycobacterium leprae (strain TN).